Reading from the N-terminus, the 186-residue chain is UPF0301 protein Swit_2673 (186 aa).

Belongs to the UPF0301 (AlgH) family.

The sequence is that of UPF0301 protein Swit_2673 from Rhizorhabdus wittichii (strain DSM 6014 / CCUG 31198 / JCM 15750 / NBRC 105917 / EY 4224 / RW1) (Sphingomonas wittichii).